Reading from the N-terminus, the 238-residue chain is Orotate phosphoribosyltransferase (238 aa).

5-phospho-alpha-D-ribose 1-diphosphate is bound at residue Lys29. 37 to 38 provides a ligand contact to orotate; sequence FF. 5-phospho-alpha-D-ribose 1-diphosphate is bound by residues 87–88, Arg118, Lys119, Lys122, His124, and 144–152; these read YK and DDVITAGTA. The orotate site is built by Thr148 and Arg176.

Belongs to the purine/pyrimidine phosphoribosyltransferase family. PyrE subfamily. Homodimer.

It carries out the reaction orotidine 5'-phosphate + diphosphate = orotate + 5-phospho-alpha-D-ribose 1-diphosphate. The protein operates within pyrimidine metabolism; UMP biosynthesis via de novo pathway; UMP from orotate: step 1/2. Its function is as follows. Catalyzes the transfer of a ribosyl phosphate group from 5-phosphoribose 1-diphosphate to orotate, leading to the formation of orotidine monophosphate (OMP). This is Orotate phosphoribosyltransferase (URA5) from Coccidioides immitis (strain RS) (Valley fever fungus).